The following is a 486-amino-acid chain: Transcription factor bHLH49 (486 aa).

Residues 1–17 (MDLSAKDEFSAEKRNPD) are compositionally biased toward basic and acidic residues. 2 disordered regions span residues 1 to 30 (MDLS…GDWR) and 194 to 300 (KEST…KDGY). Polar residues-rich tracts occupy residues 198–221 (VRSS…TQSS) and 243–254 (QKNSEAAQSHRS). Residues 273–293 (QSPNSPGKKSNSGKQQGKQSS) show a composition bias toward low complexity. Residues 309 to 359 (QATNSHSLAERVRREKISERMKFLQDLVPGCNKVTGKAVMLDEIINYVQSL) form the bHLH domain.

Homodimer. Interacts with IBH1. In terms of tissue distribution, expressed constitutively in roots, stems, and flowers.

The protein localises to the nucleus. Functionally, transcriptional activator involved in cell elongation. Regulates the expression of a subset of genes involved in cell expansion by binding to the G-box motif. This is Transcription factor bHLH49 (BHLH49) from Arabidopsis thaliana (Mouse-ear cress).